Here is a 497-residue protein sequence, read N- to C-terminus: Serine/threonine-protein kinase cst-1 (497 aa).

Residues 1–27 (MPPSTDSSRRNSEEGSSDGFKLDSSAL) are disordered. A Protein kinase domain is found at 35–286 (FDIVGKLGEG…ALRLCEHTFI (252 aa)). Residues 41-49 (LGEGSYGSV) and lysine 64 contribute to the ATP site. Aspartate 154 functions as the Proton acceptor in the catalytic mechanism. The segment at 367 to 416 (KSAYIPGSSKNGNSPRVQPPGHTASASDPSKNQPFAQDGTGPNFQLGTSE) is disordered. Residues 390 to 416 (ASASDPSKNQPFAQDGTGPNFQLGTSE) show a composition bias toward polar residues. Residues 446–493 (FEFLRNITLDELIRRKESLDSEMEEEIRELQRRYKTKRQPILDVIEIK) form the SARAH domain. A coiled-coil region spans residues 450-486 (RNITLDELIRRKESLDSEMEEEIRELQRRYKTKRQPI).

It belongs to the protein kinase superfamily. STE Ser/Thr protein kinase family. STE20 subfamily. Interacts with rsf-1 (via SARAH domain); the interaction is required for the phosphorylation of cst-1. It depends on Mg(2+) as a cofactor. Post-translationally, proteolytically cleaved by caspase-3 during apoptosis which results in kinase activation. In terms of processing, phosphorylated. As to expression, widely expressed in epidermal cells.

The enzyme catalyses L-seryl-[protein] + ATP = O-phospho-L-seryl-[protein] + ADP + H(+). The catalysed reaction is L-threonyl-[protein] + ATP = O-phospho-L-threonyl-[protein] + ADP + H(+). Its function is as follows. Serine/threonine-protein kinase which extends lifespan and delays tissue aging, probably by activating daf-16. The protein is Serine/threonine-protein kinase cst-1 of Caenorhabditis elegans.